Consider the following 452-residue polypeptide: UDP-N-acetylmuramoylalanine--D-glutamate ligase (452 aa).

Residue 119–125 (GSNGKTT) coordinates ATP.

It belongs to the MurCDEF family.

It localises to the cytoplasm. It carries out the reaction UDP-N-acetyl-alpha-D-muramoyl-L-alanine + D-glutamate + ATP = UDP-N-acetyl-alpha-D-muramoyl-L-alanyl-D-glutamate + ADP + phosphate + H(+). Its pathway is cell wall biogenesis; peptidoglycan biosynthesis. Functionally, cell wall formation. Catalyzes the addition of glutamate to the nucleotide precursor UDP-N-acetylmuramoyl-L-alanine (UMA). The polypeptide is UDP-N-acetylmuramoylalanine--D-glutamate ligase (Streptococcus pyogenes serotype M12 (strain MGAS9429)).